The primary structure comprises 140 residues: Small ribosomal subunit protein uS12 (140 aa).

Asp-102 is subject to 3-methylthioaspartic acid.

It belongs to the universal ribosomal protein uS12 family. In terms of assembly, part of the 30S ribosomal subunit. Contacts proteins S8 and S17. May interact with IF1 in the 30S initiation complex.

Functionally, with S4 and S5 plays an important role in translational accuracy. Interacts with and stabilizes bases of the 16S rRNA that are involved in tRNA selection in the A site and with the mRNA backbone. Located at the interface of the 30S and 50S subunits, it traverses the body of the 30S subunit contacting proteins on the other side and probably holding the rRNA structure together. The combined cluster of proteins S8, S12 and S17 appears to hold together the shoulder and platform of the 30S subunit. This Bacillus cereus (strain G9842) protein is Small ribosomal subunit protein uS12.